The following is an 886-amino-acid chain: Coatomer subunit gamma (886 aa).

HEAT repeat units follow at residues 66–103 (VEAT…SSDE), 288–325 (RELT…THPM), 327–359 (VTNC…TGNE), 360–397 (SSVE…KFPL), and 472–509 (SDPS…MVES). The segment at 592–613 (SQPLAEKKAQGKKPTGLGAPPA) is disordered.

The protein belongs to the COPG family. As to quaternary structure, oligomeric complex that consists of at least the alpha, beta, beta', gamma, delta, epsilon and zeta subunits.

It localises to the cytoplasm. The protein resides in the golgi apparatus membrane. It is found in the cytoplasmic vesicle. Its subcellular location is the COPI-coated vesicle membrane. Its function is as follows. The coatomer is a cytosolic protein complex that binds to dilysine motifs and reversibly associates with Golgi non-clathrin-coated vesicles, which further mediate biosynthetic protein transport from the ER, via the Golgi up to the trans Golgi network. Coatomer complex is required for budding from Golgi membranes, and is essential for the retrograde Golgi-to-ER transport of dilysine-tagged proteins. This is Coatomer subunit gamma from Arabidopsis thaliana (Mouse-ear cress).